The primary structure comprises 479 residues: MDATIAPHRIPPEMPQYGEENHIFELMQNMLEQLLIHQPEDPIPFMIQHLHRDNDNVPRIVILGPPASGKTTIAMWLCKHLNSSLLTLENLILNEFSYTATEARRLYLQRKTVPSALLVQLIQERLAEEDCIKQGWILDGIPETREQALRIQTLGITPRHVIVLSAPDTVLIERNLGKRIDPQTGEIYHTTFDWPPESEIQNRLMVPEDISELETAQKLLEYHRNIVRVIPSYPKILKVISADQPCVDVFYQALTYVQSNHRTNAPFTPRVLLLGPVGSGKSLQAALLAQKYRLVNVCCGQLLKEAVADRTTFGELIQPFFEKEMAVPDSLLMKVLSQRLDQQDCIQKGWVLHGVPRDLDQAHLLNRLGYNPNRVFFLNVPFDSIMERLTLRRIDPVTGERYHLMYKPPPTMEIQARLLQNPKDAEEQVKLKMDLFYRNSADLEQLYGSAITLNGDQDPYTVFEYIESGIINPLPKKIP.

2 adenylate kinase regions span residues 58–258 (PRIV…TYVQ) and 269–471 (PRVL…SGII). 67 to 72 (ASGKTT) is an ATP binding site. The segment at 87 to 113 (TLENLILNEFSYTATEARRLYLQRKTV) is NMP 1. AMP is bound by residues 140 to 143 (GIPE), Gln147, and Arg203. Residues 177–206 (GKRIDPQTGEIYHTTFDWPPESEIQNRLMV) form an LID 1 region. 278 to 283 (GSGKSL) is a binding site for ATP. Residues 298-327 (CCGQLLKEAVADRTTFGELIQPFFEKEMAV) form an NMP 2 region. Residues 325 to 327 (MAV), 354 to 357 (GVPR), and Gln361 each bind AMP. The tract at residues 391-424 (LRRIDPVTGERYHLMYKPPPTMEIQARLLQNPKD) is LID 2. Arg392 serves as a coordination point for ATP.

The protein belongs to the adenylate kinase family. Interacts with CFAP45 and CFAP52; CFAP45 and AK8 dimerization may create a cavity at the interface of the dimer that can accommodate AMP. Expressed in respiratory cells (at protein level).

The protein localises to the cytoplasm. It is found in the cytosol. The protein resides in the cytoskeleton. It localises to the cilium axoneme. The catalysed reaction is AMP + ATP = 2 ADP. It carries out the reaction a 2'-deoxyribonucleoside 5'-diphosphate + ATP = a 2'-deoxyribonucleoside 5'-triphosphate + ADP. It catalyses the reaction a ribonucleoside 5'-diphosphate + ATP = a ribonucleoside 5'-triphosphate + ADP. Functionally, nucleoside monophosphate (NMP) kinase that catalyzes the reversible transfer of the terminal phosphate group between nucleoside triphosphates and monophosphates. Has highest activity toward AMP, and weaker activity toward dAMP, CMP and dCMP. Also displays broad nucleoside diphosphate kinase activity. The protein is Adenylate kinase 8 (AK8) of Homo sapiens (Human).